Reading from the N-terminus, the 1379-residue chain is ABC multidrug transporter MDR2 (1379 aa).

A helical transmembrane segment spans residues 65–85 (IALIVIGTIAGIGAGIPFPLL). The ABC transmembrane type-1 1 domain occupies 69-367 (VIGTIAGIGA…MAPFMHIFAS (299 aa)). N-linked (GlcNAc...) asparagine glycosylation occurs at Asn97. Transmembrane regions (helical) follow at residues 119–139 (VLQV…HTGC), 193–213 (KVGL…VAFL), 215–235 (VATI…MAFG), 301–321 (IQFG…FWQG), and 336–356 (VSVG…FVLS). The ABC transporter 1 domain occupies 403–682 (IELQDVTFNY…DGVYAGMVRL (280 aa)). Residue 438–445 (GTSGSGKS) participates in ATP binding. Asn552 and Asn633 each carry an N-linked (GlcNAc...) asparagine glycan. A disordered region spans residues 738-758 (YMPEEADSLPTEPENEKEKPK). Helical transmembrane passes span 781–801 (LGLI…VIFG), 820–840 (GMLF…AVIV), 881–901 (LLVA…GTTI), and 920–942 (VIAW…SGVL). An ABC transmembrane type-1 2 domain is found at 781–1068 (LGLITSIMIG…MFALVPDISK (288 aa)). An N-linked (GlcNAc...) asparagine glycan is attached at Asn989. The next 2 helical transmembrane spans lie at 1008 to 1028 (FWLS…YWWG) and 1032 to 1052 (ILAG…LLFS). Residues 1135 to 1374 (VQFRNVHFRY…CESYRANVIH (240 aa)) form the ABC transporter 2 domain. ATP is bound at residue 1170 to 1177 (GPSGSGKS).

Belongs to the ABC transporter superfamily. ABCB family. Multidrug resistance exporter (TC 3.A.1.201) subfamily.

It is found in the cell membrane. Pleiotropic ABC efflux transporter that may be involved in the modulation susceptibility to a wide range of unrelated cytotoxic compounds. This is ABC multidrug transporter MDR2 from Trichophyton interdigitale (strain MR816).